The following is a 484-amino-acid chain: Cysteine--tRNA ligase (484 aa).

Zn(2+) is bound at residue Cys29. The short motif at 31 to 41 (PTVQSAPHIGH) is the 'HIGH' region element. Zn(2+)-binding residues include Cys219, His244, and Glu248. Residues 275 to 279 (KMSKS) carry the 'KMSKS' region motif. Lys278 is an ATP binding site.

The protein belongs to the class-I aminoacyl-tRNA synthetase family. As to quaternary structure, monomer. Zn(2+) serves as cofactor.

The protein resides in the cytoplasm. The enzyme catalyses tRNA(Cys) + L-cysteine + ATP = L-cysteinyl-tRNA(Cys) + AMP + diphosphate. The protein is Cysteine--tRNA ligase of Clavibacter sepedonicus (Clavibacter michiganensis subsp. sepedonicus).